Consider the following 153-residue polypeptide: Nucleoside diphosphate kinase (153 aa).

The ATP site is built by Lys9, Phe57, Arg85, Thr91, Arg102, and Asn112. His115 acts as the Pros-phosphohistidine intermediate in catalysis.

Belongs to the NDK family. Homotetramer. Mg(2+) serves as cofactor.

The protein localises to the cytoplasm. It carries out the reaction a 2'-deoxyribonucleoside 5'-diphosphate + ATP = a 2'-deoxyribonucleoside 5'-triphosphate + ADP. The catalysed reaction is a ribonucleoside 5'-diphosphate + ATP = a ribonucleoside 5'-triphosphate + ADP. Its function is as follows. Major role in the synthesis of nucleoside triphosphates other than ATP. The ATP gamma phosphate is transferred to the NDP beta phosphate via a ping-pong mechanism, using a phosphorylated active-site intermediate. The chain is Nucleoside diphosphate kinase from Parabacteroides distasonis (strain ATCC 8503 / DSM 20701 / CIP 104284 / JCM 5825 / NCTC 11152).